Here is a 199-residue protein sequence, read N- to C-terminus: ATP synthase subunit a (199 aa).

Transmembrane regions (helical) follow at residues 2 to 22 (TNVY…LFYF), 25 to 45 (SMLG…FSYT), 53 to 73 (VISV…YFMY), 80 to 100 (MIEF…LTFI), 143 to 163 (VNVL…ELYL), and 164 to 184 (GIFY…VFFI).

It belongs to the ATPase A chain family. As to quaternary structure, F-type ATPases have 2 components, CF(1) - the catalytic core - and CF(0) - the membrane proton channel. CF(1) has five subunits: alpha(3), beta(3), gamma(1), delta(1), epsilon(1). CF(0) has three main subunits: a, b and c.

It localises to the mitochondrion inner membrane. Its function is as follows. Mitochondrial membrane ATP synthase (F(1)F(0) ATP synthase or Complex V) produces ATP from ADP in the presence of a proton gradient across the membrane which is generated by electron transport complexes of the respiratory chain. F-type ATPases consist of two structural domains, F(1) - containing the extramembraneous catalytic core and F(0) - containing the membrane proton channel, linked together by a central stalk and a peripheral stalk. During catalysis, ATP synthesis in the catalytic domain of F(1) is coupled via a rotary mechanism of the central stalk subunits to proton translocation. Key component of the proton channel; it may play a direct role in the translocation of protons across the membrane. This Ascaris suum (Pig roundworm) protein is ATP synthase subunit a (ATP6).